A 449-amino-acid chain; its full sequence is UDP-N-acetylmuramoyl-tripeptide--D-alanyl-D-alanine ligase (449 aa).

ATP is bound at residue 106–112; it reads GSVGKTS.

Belongs to the MurCDEF family. MurF subfamily.

The protein resides in the cytoplasm. It catalyses the reaction D-alanyl-D-alanine + UDP-N-acetyl-alpha-D-muramoyl-L-alanyl-gamma-D-glutamyl-meso-2,6-diaminopimelate + ATP = UDP-N-acetyl-alpha-D-muramoyl-L-alanyl-gamma-D-glutamyl-meso-2,6-diaminopimeloyl-D-alanyl-D-alanine + ADP + phosphate + H(+). It functions in the pathway cell wall biogenesis; peptidoglycan biosynthesis. Its function is as follows. Involved in cell wall formation. Catalyzes the final step in the synthesis of UDP-N-acetylmuramoyl-pentapeptide, the precursor of murein. The sequence is that of UDP-N-acetylmuramoyl-tripeptide--D-alanyl-D-alanine ligase from Rickettsia prowazekii (strain Madrid E).